The following is a 308-amino-acid chain: Phosphoribosylaminoimidazole-succinocarboxamide synthase (308 aa).

Belongs to the SAICAR synthetase family.

The enzyme catalyses 5-amino-1-(5-phospho-D-ribosyl)imidazole-4-carboxylate + L-aspartate + ATP = (2S)-2-[5-amino-1-(5-phospho-beta-D-ribosyl)imidazole-4-carboxamido]succinate + ADP + phosphate + 2 H(+). It functions in the pathway purine metabolism; IMP biosynthesis via de novo pathway; 5-amino-1-(5-phospho-D-ribosyl)imidazole-4-carboxamide from 5-amino-1-(5-phospho-D-ribosyl)imidazole-4-carboxylate: step 1/2. In Xylella fastidiosa (strain Temecula1 / ATCC 700964), this protein is Phosphoribosylaminoimidazole-succinocarboxamide synthase.